Reading from the N-terminus, the 374-residue chain is Erythronate-4-phosphate dehydrogenase (374 aa).

Ser53 and Thr75 together coordinate substrate. Residue Asp160 coordinates NAD(+). Residue Arg222 is part of the active site. Asp246 lines the NAD(+) pocket. The active site involves Glu251. Catalysis depends on His268, which acts as the Proton donor. Position 271 (Gly271) interacts with NAD(+). Tyr272 contributes to the substrate binding site.

Belongs to the D-isomer specific 2-hydroxyacid dehydrogenase family. PdxB subfamily. As to quaternary structure, homodimer.

It localises to the cytoplasm. The catalysed reaction is 4-phospho-D-erythronate + NAD(+) = (R)-3-hydroxy-2-oxo-4-phosphooxybutanoate + NADH + H(+). The protein operates within cofactor biosynthesis; pyridoxine 5'-phosphate biosynthesis; pyridoxine 5'-phosphate from D-erythrose 4-phosphate: step 2/5. Catalyzes the oxidation of erythronate-4-phosphate to 3-hydroxy-2-oxo-4-phosphonooxybutanoate. The chain is Erythronate-4-phosphate dehydrogenase from Psychrobacter sp. (strain PRwf-1).